Reading from the N-terminus, the 391-residue chain is UPF0229 protein CA_C0580 (391 aa).

Disordered stretches follow at residues 1 to 20 and 75 to 109; these read MAIF…TIGD and VGSG…NSEG. The span at 96-106 shows a compositional bias: gly residues; sequence GSKGKGKGAGN.

Belongs to the UPF0229 family.

This Clostridium acetobutylicum (strain ATCC 824 / DSM 792 / JCM 1419 / IAM 19013 / LMG 5710 / NBRC 13948 / NRRL B-527 / VKM B-1787 / 2291 / W) protein is UPF0229 protein CA_C0580.